We begin with the raw amino-acid sequence, 165 residues long: MLRMRALWLALVLLILSIPAVSAQITVTRDLPDSAKVGDEITVTLALTIGSEKPAGAIIEESIPDGASYISSSPEATVSEGKLKWAFYGEQLKDMTLQYTVKVEKAGKLEFSGTVKTLLGNENIGGDSELEVSEKSAEQPKGTPGFEAFVAVAVIGSIALLRRKH.

A run of 2 helical transmembrane segments spans residues 7–27 (LWLA…QITV) and 141–161 (KGTP…IALL).

It is found in the cell membrane. This is an uncharacterized protein from Archaeoglobus fulgidus (strain ATCC 49558 / DSM 4304 / JCM 9628 / NBRC 100126 / VC-16).